Here is a 399-residue protein sequence, read N- to C-terminus: LEM domain-containing protein Bocksbeutel (399 aa).

Residues 4–48 form the LEM domain; that stretch reads LSYLDTLGNKELLAKCLEHGLPGVPVTDSTRSVIIRRLKAKITGV. Disordered stretches follow at residues 49-103, 119-141, and 233-287; these read PLNK…EQSR, SVQTTTTVSDMSSQSEDDDSYMV, and NSTS…SNLA. Composition is skewed to polar residues over residues 68 to 77 and 89 to 99; these read HGSQVTTPTS and GRTSSNNNKIS. Residues 233-256 show a composition bias toward polar residues; sequence NSTSYEESSTYNPKLSPISPRNTF. A helical membrane pass occupies residues 377–397; that stretch reads FYLILVVSVMLATMVYVVLTP.

The protein resides in the nucleus inner membrane. The protein localises to the cytoplasm. It is found in the nucleus. Its subcellular location is the nucleoplasm. It localises to the endoplasmic reticulum. In terms of biological role, inner nuclear membrane protein. May have a role in maintaining the structural integrity of the nuclear lamina. During pupal development, plays essential and redundant functions with the other LEM domain proteins; MAN1 and Ote. Also has a redundant but important role with Ote in larval development. The protein is LEM domain-containing protein Bocksbeutel of Drosophila melanogaster (Fruit fly).